A 47-amino-acid chain; its full sequence is MKKVPLNCEVCGNRNYNVPKKEGSATRLTLKKYCPKCNSHTVHKESK.

This sequence belongs to the bacterial ribosomal protein bL33 family.

The protein is Large ribosomal subunit protein bL33 of Staphylococcus capitis.